A 340-amino-acid polypeptide reads, in one-letter code: MEF2 transcription factor homolog (340 aa).

The MADS-box domain maps to 1 to 61 (MGRKKIQITR…NKLFQYASTD (61 aa)). 4 disordered regions span residues 90-112 (RKEGNQGGGNSDDESPGPSTSPV), 193-217 (NQRNDPLSSTSVAPSSSSSKHLDFP), 258-283 (LQQRPVSQPAPSISNSSTNGISNGTS), and 312-340 (PNTYVKMEPHSPPEKRPRITTEWRPQQLT). The span at 200–211 (SSTSVAPSSSSS) shows a compositional bias: low complexity. The span at 258 to 268 (LQQRPVSQPAP) shows a compositional bias: polar residues. The segment covering 269–283 (SISNSSTNGISNGTS) has biased composition (low complexity). Residues 318 to 332 (MEPHSPPEKRPRITT) are compositionally biased toward basic and acidic residues.

This sequence belongs to the MEF2 family. Interacts with histone deacetylase hda-4 isoform b.

Its subcellular location is the nucleus. Transcription regulator. Binds specifically to the MEF2 element, 5'-[TC]TA[AT][AT][AT][AT]TA[AG]-3' in the regulatory elements of target genes, such as chemoreceptors str-1 and srh-234. Involved in transduction of sensory signals, together with egl-4, kin-29 and hda-4; binding to histone deacetylase hda-4 enables negative modulation of chemoreceptor gene expression in chemosensory neurons. In response to starvation, negatively modulates expression of chemoreceptor srh-234 in ADL sensory neurons, acting in concert with basic helix-loop-helix (bHLH) transcription factors. Plays a role in regulating muscle sensitivity to acetylcholine (ACh) and the magnitude of presynaptic ACh release via a retrograde signal, perhaps by indirectly decreasing Ras-related protein Rab-3 activity. In Caenorhabditis elegans, this protein is MEF2 transcription factor homolog.